Reading from the N-terminus, the 201-residue chain is Glutathione peroxidase 1 (201 aa).

S32 carries the phosphoserine modification. Residue U47 is part of the active site. Position 47 (U47) is a non-standard amino acid, selenocysteine. 3 positions are modified to N6-acetyllysine; alternate: K86, K112, and K146. N6-succinyllysine; alternate occurs at positions 86, 112, and 146. Phosphoserine is present on residues S195 and S199.

Belongs to the glutathione peroxidase family. As to quaternary structure, homotetramer. Interacts with MIEN1. In terms of processing, during periods of oxidative stress, Sec-47 may react with a superoxide radical, irreversibly lose hydroselenide and be converted to dehydroalanine.

The protein resides in the cytoplasm. Its subcellular location is the mitochondrion. It catalyses the reaction 2 glutathione + H2O2 = glutathione disulfide + 2 H2O. The enzyme catalyses a hydroperoxy polyunsaturated fatty acid + 2 glutathione = a hydroxy polyunsaturated fatty acid + glutathione disulfide + H2O. The catalysed reaction is tert-butyl hydroperoxide + 2 glutathione = tert-butanol + glutathione disulfide + H2O. It carries out the reaction cumene hydroperoxide + 2 glutathione = 2-phenylpropan-2-ol + glutathione disulfide + H2O. It catalyses the reaction (13S)-hydroperoxy-(9Z,11E)-octadecadienoate + 2 glutathione = (13S)-hydroxy-(9Z,11E)-octadecadienoate + glutathione disulfide + H2O. The enzyme catalyses (9S)-hydroperoxy-(10E,12Z)-octadecadienoate + 2 glutathione = (9S)-hydroxy-(10E,12Z)-octadecadienoate + glutathione disulfide + H2O. The catalysed reaction is (5S)-hydroperoxy-(6E,8Z,11Z,14Z)-eicosatetraenoate + 2 glutathione = (5S)-hydroxy-(6E,8Z,11Z,14Z)-eicosatetraenoate + glutathione disulfide + H2O. It carries out the reaction (12S)-hydroperoxy-(5Z,8Z,10E,14Z)-eicosatetraenoate + 2 glutathione = (12S)-hydroxy-(5Z,8Z,10E,14Z)-eicosatetraenoate + glutathione disulfide + H2O. It catalyses the reaction (12R)-hydroperoxy-(5Z,8Z,10E,14Z)-eicosatetraenoate + 2 glutathione = (12R)-hydroxy-(5Z,8Z,10E,14Z)-eicosatetraenoate + glutathione disulfide + H2O. The enzyme catalyses (15S)-hydroperoxy-(5Z,8Z,11Z,13E)-eicosatetraenoate + 2 glutathione = (15S)-hydroxy-(5Z,8Z,11Z,13E)-eicosatetraenoate + glutathione disulfide + H2O. The catalysed reaction is (5S)-hydroperoxy-(6E,8Z,11Z,14Z,17Z)-eicosapentaenoate + 2 glutathione = (5S)-hydroxy-(6E,8Z,11Z,14Z,17Z)-eicosapentaenoate + glutathione disulfide + H2O. It carries out the reaction (12S)-hydroperoxy-(5Z,8Z,10E,14Z,17Z)-eicosapentaenoate + 2 glutathione = (12S)-hydroxy-(5Z,8Z,10E,14Z,17Z)-eicosapentaenoate + glutathione disulfide + H2O. It catalyses the reaction (15S)-hydroperoxy-(5Z,8Z,11Z,13E,17Z)-eicosapentaenoate + 2 glutathione = (15S)-hydroxy-(5Z,8Z,11Z,13E,17Z)-eicosapentaenoate + glutathione disulfide + H2O. The enzyme catalyses (15S)-hydroperoxy-(11Z,13E)-eicosadienoate + 2 glutathione = (15S)-hydroxy-(11Z,13E)-eicosadienoate + glutathione disulfide + H2O. The catalysed reaction is (17S)-hydroperoxy-(4Z,7Z,10Z,13Z,15E,19Z)-docosahexaenoate + 2 glutathione = (17S)-hydroxy-(4Z,7Z,10Z,13Z,15E,19Z)-docosahexaenoate + glutathione disulfide + H2O. Functionally, catalyzes the reduction of hydroperoxides in a glutathione-dependent manner thus regulating cellular redox homeostasis. Can reduce small soluble hydroperoxides such as H2O2, cumene hydroperoxide and tert-butyl hydroperoxide, as well as several fatty acid-derived hydroperoxides. In platelets catalyzes the reduction of 12-hydroperoxyeicosatetraenoic acid, the primary product of the arachidonate 12-lipoxygenase pathway. The protein is Glutathione peroxidase 1 (GPX1) of Macaca fuscata fuscata (Japanese macaque).